The sequence spans 62 residues: Mastoparan-AF (62 aa).

An N-terminal signal peptide occupies residues 1–25 (MKNTILILFTAFIALLGFFGMSAEA). AXPX repeat units follow at residues 25–28 (ADPI), 29–32 (ADPI), 33–36 (ADPI), and 43–46 (ADPE). A propeptide spanning residues 26 to 47 (DPIADPIADPISGPNAEADPEA) is cleaved from the precursor. Position 61 is a phenylalanine amide (Phe61).

This sequence belongs to the MCD family. Mastoparan subfamily. As to expression, expressed by the venom gland.

The protein resides in the secreted. The protein localises to the target cell membrane. Functionally, antimicrobial and mast cell degranulating peptide. Has broad spectrum antibacterial activity against both Gram-positive and Gram-negative bacteria (S.aureus MIC=16-32 ug/ml, S.xylosus MIC=1.5 ug/ml, S.alactolyticus MIC=8 ug/ml, C.koseri MIC=4 ug/ml, E.coli MIC=4-32 ug/ml, K.pneumoniae MIC=32 ug/ml, P.aerugiosa MIC=96 ug/ml, S.choleraesuis MIC=16 ug/ml, S.typhimurium MIC=32 ug/ml, V.parahamelytics MIC=16 ug/ml). Is also active on multi-antibiotic resistant hemolytic E.coli O157:H7. Acts by affecting membrane permeability. On E.coli O157:H7, acts through multiple membrane disruption patterns, including large perforations (full opening) at apical ends (hollow tubes), vesicle budding, forming dents, and membrane corrugation and invagination leading to irregular pits or pores. Exerts 40% lower membrane permeabilization activities on E.coli O157:H7 than on the non-pathogen E.coli BL21. Shows little hemolytic activities on sheep, chicken and human erythrocytes, but with a higher activity on chicken erythrocytes. Its mast cell degranulation activity may be related to the activation of G-protein coupled receptors in mast cells as well as interaction with other proteins located in cell endosomal membranes in the mast cells. This is Mastoparan-AF from Vespa affinis (Lesser banded hornet).